A 240-amino-acid chain; its full sequence is Triosephosphate isomerase (240 aa).

8–10 (NWK) lines the substrate pocket. The active-site Electrophile is His93. Catalysis depends on Glu160, which acts as the Proton acceptor. Gly166 serves as a coordination point for substrate.

Belongs to the triosephosphate isomerase family. Homodimer.

It localises to the cytoplasm. The catalysed reaction is D-glyceraldehyde 3-phosphate = dihydroxyacetone phosphate. It participates in carbohydrate biosynthesis; gluconeogenesis. The protein operates within carbohydrate degradation; glycolysis; D-glyceraldehyde 3-phosphate from glycerone phosphate: step 1/1. In terms of biological role, involved in the gluconeogenesis. Catalyzes stereospecifically the conversion of dihydroxyacetone phosphate (DHAP) to D-glyceraldehyde-3-phosphate (G3P). This Ehrlichia chaffeensis (strain ATCC CRL-10679 / Arkansas) protein is Triosephosphate isomerase.